The chain runs to 430 residues: UDP-N-acetylglucosamine 1-carboxyvinyltransferase 1 (430 aa).

22-23 (KN) provides a ligand contact to phosphoenolpyruvate. UDP-N-acetyl-alpha-D-glucosamine is bound at residue Arg-93. The active-site Proton donor is the Cys-117. Cys-117 bears the 2-(S-cysteinyl)pyruvic acid O-phosphothioketal mark. Residues 122 to 126 (RPVDL), Asp-305, and Val-327 each bind UDP-N-acetyl-alpha-D-glucosamine.

It belongs to the EPSP synthase family. MurA subfamily.

The protein localises to the cytoplasm. It catalyses the reaction phosphoenolpyruvate + UDP-N-acetyl-alpha-D-glucosamine = UDP-N-acetyl-3-O-(1-carboxyvinyl)-alpha-D-glucosamine + phosphate. It participates in cell wall biogenesis; peptidoglycan biosynthesis. Its function is as follows. Cell wall formation. Adds enolpyruvyl to UDP-N-acetylglucosamine. The protein is UDP-N-acetylglucosamine 1-carboxyvinyltransferase 1 of Listeria innocua serovar 6a (strain ATCC BAA-680 / CLIP 11262).